The following is a 921-amino-acid chain: Probable dipeptidyl-aminopeptidase B (921 aa).

The interval 1 to 87 (MDAPATASRQ…EADTNDLETG (87 aa)) is disordered. The Cytoplasmic segment spans residues 1–108 (MDAPATASRQ…RVGVDRGLKK (108 aa)). The span at 22–33 (SSLSTVSTTSLV) shows a compositional bias: low complexity. The segment covering 35 to 45 (DRLHEHNEKSY) has biased composition (basic and acidic residues). Positions 66–75 (PDDDDDDDES) are enriched in acidic residues. Residues 109-129 (VILILAAAFLFAWGAALFVFL) traverse the membrane as a helical; Signal-anchor for type II membrane protein segment. Residues 130–921 (SNKSYKHAST…KPIVEPKARV (792 aa)) lie on the Vacuolar side of the membrane. N-linked (GlcNAc...) asparagine glycosylation is found at N131, N364, and N577. S768 acts as the Charge relay system in catalysis. An N-linked (GlcNAc...) asparagine glycan is attached at N827. Active-site charge relay system residues include D845 and H878.

The protein belongs to the peptidase S9B family.

It is found in the vacuole membrane. The catalysed reaction is Release of an N-terminal dipeptide, Xaa-Yaa-|-Zaa-, from a polypeptide, preferentially when Yaa is Pro, provided Zaa is neither Pro nor hydroxyproline.. Its function is as follows. Type IV dipeptidyl-peptidase which removes N-terminal dipeptides sequentially from polypeptides having unsubstituted N-termini provided that the penultimate residue is proline. The sequence is that of Probable dipeptidyl-aminopeptidase B (DAPB) from Colletotrichum graminicola (strain M1.001 / M2 / FGSC 10212) (Maize anthracnose fungus).